The following is a 250-amino-acid chain: Indole-3-glycerol phosphate synthase (250 aa).

This sequence belongs to the TrpC family.

The enzyme catalyses 1-(2-carboxyphenylamino)-1-deoxy-D-ribulose 5-phosphate + H(+) = (1S,2R)-1-C-(indol-3-yl)glycerol 3-phosphate + CO2 + H2O. It functions in the pathway amino-acid biosynthesis; L-tryptophan biosynthesis; L-tryptophan from chorismate: step 4/5. This is Indole-3-glycerol phosphate synthase from Bacillus velezensis (strain DSM 23117 / BGSC 10A6 / LMG 26770 / FZB42) (Bacillus amyloliquefaciens subsp. plantarum).